The following is a 228-amino-acid chain: Probable septum site-determining protein MinC (228 aa).

Belongs to the MinC family. In terms of assembly, interacts with MinD and FtsZ.

Cell division inhibitor that blocks the formation of polar Z ring septums. Rapidly oscillates between the poles of the cell to destabilize FtsZ filaments that have formed before they mature into polar Z rings. Prevents FtsZ polymerization. The protein is Probable septum site-determining protein MinC of Yersinia enterocolitica serotype O:8 / biotype 1B (strain NCTC 13174 / 8081).